We begin with the raw amino-acid sequence, 179 residues long: Inner membrane-spanning protein YciB (179 aa).

The next 6 membrane-spanning stretches (helical) occupy residues F3–Y23, T24–H44, P49–H69, W76–W96, A121–F141, and F149–L169.

Belongs to the YciB family.

Its subcellular location is the cell inner membrane. Functionally, plays a role in cell envelope biogenesis, maintenance of cell envelope integrity and membrane homeostasis. The chain is Inner membrane-spanning protein YciB from Cupriavidus necator (strain ATCC 17699 / DSM 428 / KCTC 22496 / NCIMB 10442 / H16 / Stanier 337) (Ralstonia eutropha).